Reading from the N-terminus, the 153-residue chain is Selenoprotein F (153 aa).

The N-terminal stretch at 1–19 (MAGEVYLLWLLPLLQGLAS) is a signal peptide. Residue Sec-84 is a non-standard amino acid, selenocysteine.

The protein belongs to the selenoprotein M/F family. Higher levels in polster, prechordal plate, axis, otic vesicle and somites. Lower levels in fin buds.

It is found in the endoplasmic reticulum lumen. Its function is as follows. May be involved in redox reactions associated with the formation of disulfide bonds. May contribute to the quality control of protein folding in the endoplasmic reticulum. The sequence is that of Selenoprotein F from Danio rerio (Zebrafish).